A 458-amino-acid polypeptide reads, in one-letter code: Hepatocyte nuclear factor 3-beta (458 aa).

A transactivation domain 1 region spans residues 14-93; that stretch reads DWSSYYAEPE…AGAMAGMSGS (80 aa). A Nuclear localization signal motif is present at residues 106-113; that stretch reads LSPSLSPL. Thr-156 carries the phosphothreonine; by PKB/AKT1 modification. Positions 159–252 form a DNA-binding region, fork-head; the sequence is KPPYSYISLI…ENGCYLRRQK (94 aa). Ser-212 and Ser-283 each carry phosphoserine. A disordered region spans residues 286–365; that stretch reads QLGEAAGSAS…PGLPPEAHLK (80 aa). Residues 294-310 show a composition bias toward polar residues; the sequence is ASETPAGTESPHSSASP. Position 301 is a phosphothreonine (Thr-301). Ser-303, Ser-306, Ser-307, and Ser-309 each carry phosphoserine. The span at 339-352 shows a compositional bias: low complexity; sequence PGQQQQAAAHLLGP. The transactivation domain 2 stretch occupies residues 361–458; it reads EAHLKPEHHY…VYSRPIMNSS (98 aa). 2 positions are modified to phosphoserine: Ser-437 and Ser-458.

As to quaternary structure, binds DNA as a monomer. Binds TLE1. Interacts with FOXA1 and FOXA3. Interacts with PRKDC. Interacts with AKT1. Interacts with TET1; this interaction may recruit TET1 to specific genomic loci to mediate their demethylation. Phosphorylation on Thr-156 abolishes binding to target promoters and subsequent transcription activation upon insulin stimulation. Liver.

It localises to the nucleus. It is found in the cytoplasm. In terms of biological role, transcription factor that is involved in embryonic development, establishment of tissue-specific gene expression and regulation of gene expression in differentiated tissues. Is thought to act as a 'pioneer' factor opening the compacted chromatin for other proteins through interactions with nucleosomal core histones and thereby replacing linker histones at target enhancer and/or promoter sites. Binds DNA with the consensus sequence 5'-[AC]A[AT]T[AG]TT[GT][AG][CT]T[CT]-3'. In embryonic development is required for notochord formation. Involved in the development of multiple endoderm-derived organ systems such as the liver, pancreas and lungs; FOXA1 and FOXA2 seem to have at least in part redundant roles. Originally described as a transcription activator for a number of liver genes such as AFP, albumin, tyrosine aminotransferase, PEPCK, etc. Interacts with the cis-acting regulatory regions of these genes. Involved in glucose homeostasis; regulates the expression of genes important for glucose sensing in pancreatic beta-cells and glucose homeostasis. Involved in regulation of fat metabolism. Acts synergistically with ONECUT1 to activate transcription of female-specific CYP2C12; the function is inhibited by growth hormone-activated STAT5B. Acts synergistically with HNF4A to activate transcription of APOA1. The polypeptide is Hepatocyte nuclear factor 3-beta (Foxa2) (Rattus norvegicus (Rat)).